A 431-amino-acid polypeptide reads, in one-letter code: Glutamate-1-semialdehyde 2,1-aminomutase (431 aa).

Residue Lys269 is modified to N6-(pyridoxal phosphate)lysine.

This sequence belongs to the class-III pyridoxal-phosphate-dependent aminotransferase family. HemL subfamily. Homodimer. Pyridoxal 5'-phosphate is required as a cofactor.

The protein localises to the cytoplasm. The catalysed reaction is (S)-4-amino-5-oxopentanoate = 5-aminolevulinate. It functions in the pathway porphyrin-containing compound metabolism; protoporphyrin-IX biosynthesis; 5-aminolevulinate from L-glutamyl-tRNA(Glu): step 2/2. The polypeptide is Glutamate-1-semialdehyde 2,1-aminomutase (Tolumonas auensis (strain DSM 9187 / NBRC 110442 / TA 4)).